The primary structure comprises 304 residues: MTPQLATTICGIALKNPVLAASGTFAYGVEFEKLVDLNALGGFVVKGLSREPIEGNPPPRVFESEAGMINSVGLQNIGVRAFVAEKLPALAGLRTAVFANVFGYCTEDYVEVVRVLNDHAGLAGYELNVSCPNTAHGGIYFSNDPVLLAEVVTAAKRVATRPLIVKLSPNVSAIEPLARVAEESGADALSLVNTVISLAIDARTRRPRIGAGFGGLSGPAIKPIALRFVYQAARAVRIPVIGLGGIATGEDAAEFLIAGASAVEVGTATFWDPRAPLRIAEELGKFLEREGIRKATDLVGTLKF.

Residues Ser22 and 46-47 (KG) each bind FMN. Residues Lys46 and 70-74 (NSVGL) contribute to the substrate site. 2 residues coordinate FMN: Asn100 and Asn128. Asn128 contacts substrate. Cys131 serves as the catalytic Nucleophile. The FMN site is built by Lys166 and Val192. 193–194 (NT) contributes to the substrate binding site. FMN-binding positions include Gly218, 244–245 (GG), and 266–267 (GT).

This sequence belongs to the dihydroorotate dehydrogenase family. Type 1 subfamily. Homodimer. FMN is required as a cofactor.

The protein localises to the cytoplasm. It catalyses the reaction (S)-dihydroorotate + fumarate = orotate + succinate. It functions in the pathway pyrimidine metabolism; UMP biosynthesis via de novo pathway. In terms of biological role, catalyzes the conversion of dihydroorotate to orotate with fumarate as the electron acceptor. This Solibacter usitatus (strain Ellin6076) protein is Putative dihydroorotate dehydrogenase A (fumarate) (pyrD).